A 98-amino-acid chain; its full sequence is Nucleoid-associated protein pc0477 (98 aa).

It belongs to the YbaB/EbfC family. Homodimer.

Its subcellular location is the cytoplasm. It is found in the nucleoid. Its function is as follows. Binds to DNA and alters its conformation. May be involved in regulation of gene expression, nucleoid organization and DNA protection. This chain is Nucleoid-associated protein pc0477, found in Protochlamydia amoebophila (strain UWE25).